The chain runs to 337 residues: Glyceraldehyde-3-phosphate dehydrogenase (337 aa).

Residues 13–14 (RI), aspartate 35, and arginine 80 each bind NAD(+). D-glyceraldehyde 3-phosphate is bound by residues 150–152 (SCT), threonine 181, 210–211 (TG), and arginine 233. Cysteine 151 serves as the catalytic Nucleophile. Asparagine 315 lines the NAD(+) pocket.

The protein belongs to the glyceraldehyde-3-phosphate dehydrogenase family. Homotetramer.

It is found in the cytoplasm. It catalyses the reaction D-glyceraldehyde 3-phosphate + phosphate + NAD(+) = (2R)-3-phospho-glyceroyl phosphate + NADH + H(+). It functions in the pathway carbohydrate degradation; glycolysis; pyruvate from D-glyceraldehyde 3-phosphate: step 1/5. In Colletotrichum lindemuthianum (Bean anthracnose fungus), this protein is Glyceraldehyde-3-phosphate dehydrogenase (GPDA).